A 75-amino-acid chain; its full sequence is Acylphosphatase-like protein MJ1405 (75 aa).

An Acylphosphatase-like domain is found at 8 to 75; sequence TYEIIIYGRI…TNFWRVRKCK (68 aa).

The protein is Acylphosphatase-like protein MJ1405 of Methanocaldococcus jannaschii (strain ATCC 43067 / DSM 2661 / JAL-1 / JCM 10045 / NBRC 100440) (Methanococcus jannaschii).